A 267-amino-acid chain; its full sequence is Undecaprenyl-diphosphatase (267 aa).

The next 7 membrane-spanning stretches (helical) occupy residues 4 to 24 (LYAL…ISST), 41 to 61 (FWKS…IFVF), 69 to 89 (LDIW…GLFV), 96 to 116 (LFNG…FILI), 173 to 193 (AAEF…AYSI), 207 to 227 (IPLG…IKFF), and 239 to 259 (FGIY…SGIL).

This sequence belongs to the UppP family.

The protein localises to the cell inner membrane. The enzyme catalyses di-trans,octa-cis-undecaprenyl diphosphate + H2O = di-trans,octa-cis-undecaprenyl phosphate + phosphate + H(+). Functionally, catalyzes the dephosphorylation of undecaprenyl diphosphate (UPP). Confers resistance to bacitracin. This chain is Undecaprenyl-diphosphatase, found in Campylobacter jejuni subsp. jejuni serotype O:23/36 (strain 81-176).